The following is an 82-amino-acid chain: Progonadoliberin-3 (82 aa).

A signal peptide spans 1 to 23 (MDLSNRTVVQVVVLALVAQVTLS). Gln24 is modified (pyrrolidone carboxylic acid). Position 33 is a glycine amide (Gly33).

This sequence belongs to the GnRH family. As to expression, brain.

It is found in the secreted. In terms of biological role, stimulates the secretion of gonadotropins. The polypeptide is Progonadoliberin-3 (gnrh3) (Oncorhynchus nerka (Sockeye salmon)).